Here is a 355-residue protein sequence, read N- to C-terminus: uncharacterized protein (355 aa).

The N-terminal stretch at 1–27 is a signal peptide; it reads MESPIRTARRTLPLLIGATCLVLALTG. Cys-28 carries N-palmitoyl cysteine lipidation. Cys-28 carries the S-diacylglycerol cysteine lipid modification. The tract at residues 33 to 53 is disordered; sequence GPAQARPTPSASTSPKQAPAL. The segment covering 39 to 48 has biased composition (polar residues); it reads PTPSASTSPK.

Its subcellular location is the cell membrane. This is an uncharacterized protein from Streptomyces coelicolor (strain ATCC BAA-471 / A3(2) / M145).